We begin with the raw amino-acid sequence, 56 residues long: Large ribosomal subunit protein bL33A (56 aa).

This sequence belongs to the bacterial ribosomal protein bL33 family.

In Nocardia farcinica (strain IFM 10152), this protein is Large ribosomal subunit protein bL33A.